We begin with the raw amino-acid sequence, 680 residues long: DNA-directed RNA polymerase subunit beta' (680 aa).

Zn(2+) is bound by residues Cys-69, Cys-71, Cys-87, and Cys-90. Positions 489, 491, and 493 each coordinate Mg(2+).

It belongs to the RNA polymerase beta' chain family. RpoC1 subfamily. In plastids the minimal PEP RNA polymerase catalytic core is composed of four subunits: alpha, beta, beta', and beta''. When a (nuclear-encoded) sigma factor is associated with the core the holoenzyme is formed, which can initiate transcription. Requires Mg(2+) as cofactor. Zn(2+) serves as cofactor.

The protein localises to the plastid. The protein resides in the chloroplast. It carries out the reaction RNA(n) + a ribonucleoside 5'-triphosphate = RNA(n+1) + diphosphate. Its function is as follows. DNA-dependent RNA polymerase catalyzes the transcription of DNA into RNA using the four ribonucleoside triphosphates as substrates. The polypeptide is DNA-directed RNA polymerase subunit beta' (Ranunculus macranthus (Large buttercup)).